A 334-amino-acid chain; its full sequence is Holliday junction branch migration complex subunit RuvB (334 aa).

Residues 1-182 are large ATPase domain (RuvB-L); that stretch reads MDDRMVDQSM…FGVHLRLEYY (182 aa). Residues leucine 21, arginine 22, glycine 63, lysine 66, threonine 67, threonine 68, 129-131, arginine 172, tyrosine 182, and arginine 219 contribute to the ATP site; that span reads EDF. Residue threonine 67 coordinates Mg(2+). Positions 183 to 253 are small ATPAse domain (RuvB-S); that stretch reads QELELKEIIV…TTRASLQLLQ (71 aa). The interval 256–334 is head domain (RuvB-H); the sequence is DEGLDYIDHK…HFSKKNGKKE (79 aa). Residues arginine 292, arginine 311, and arginine 316 each coordinate DNA.

It belongs to the RuvB family. In terms of assembly, homohexamer. Forms an RuvA(8)-RuvB(12)-Holliday junction (HJ) complex. HJ DNA is sandwiched between 2 RuvA tetramers; dsDNA enters through RuvA and exits via RuvB. An RuvB hexamer assembles on each DNA strand where it exits the tetramer. Each RuvB hexamer is contacted by two RuvA subunits (via domain III) on 2 adjacent RuvB subunits; this complex drives branch migration. In the full resolvosome a probable DNA-RuvA(4)-RuvB(12)-RuvC(2) complex forms which resolves the HJ.

Its subcellular location is the cytoplasm. It catalyses the reaction ATP + H2O = ADP + phosphate + H(+). In terms of biological role, the RuvA-RuvB-RuvC complex processes Holliday junction (HJ) DNA during genetic recombination and DNA repair, while the RuvA-RuvB complex plays an important role in the rescue of blocked DNA replication forks via replication fork reversal (RFR). RuvA specifically binds to HJ cruciform DNA, conferring on it an open structure. The RuvB hexamer acts as an ATP-dependent pump, pulling dsDNA into and through the RuvAB complex. RuvB forms 2 homohexamers on either side of HJ DNA bound by 1 or 2 RuvA tetramers; 4 subunits per hexamer contact DNA at a time. Coordinated motions by a converter formed by DNA-disengaged RuvB subunits stimulates ATP hydrolysis and nucleotide exchange. Immobilization of the converter enables RuvB to convert the ATP-contained energy into a lever motion, pulling 2 nucleotides of DNA out of the RuvA tetramer per ATP hydrolyzed, thus driving DNA branch migration. The RuvB motors rotate together with the DNA substrate, which together with the progressing nucleotide cycle form the mechanistic basis for DNA recombination by continuous HJ branch migration. Branch migration allows RuvC to scan DNA until it finds its consensus sequence, where it cleaves and resolves cruciform DNA. The sequence is that of Holliday junction branch migration complex subunit RuvB from Staphylococcus saprophyticus subsp. saprophyticus (strain ATCC 15305 / DSM 20229 / NCIMB 8711 / NCTC 7292 / S-41).